Here is a 705-residue protein sequence, read N- to C-terminus: Tetratricopeptide repeat protein 12 (705 aa).

Threonine 71 is subject to Phosphothreonine. TPR repeat units lie at residues 106-139 (ADALKEKGNEAFAEGNYETAILRYSEGLEKLKDM), 140-173 (KVLYTNRAQAYMKLEDYEKALVDCEWALKCDEKC), and 174-207 (TKAYFHMGKANLALKNYSVSRECYKKILEINPKL).

As to expression, expressed in testis and in epithelial cells of trachea and bronchial tube.

Its subcellular location is the cytoplasm. Its function is as follows. Cytoplasmic protein that plays a role in the proper assembly of dynein arm complexes in motile cilia in both respiratory cells and sperm flagella. This Homo sapiens (Human) protein is Tetratricopeptide repeat protein 12 (TTC12).